We begin with the raw amino-acid sequence, 191 residues long: Putative zinc metalloprotease MJ0611 (191 aa).

The chain crosses the membrane as a helical span at residues 20 to 40 (AIAFIFSYPNFSILVFIISLI). Residue histidine 49 participates in Zn(2+) binding. The active site involves glutamate 50. Histidine 53 provides a ligand contact to Zn(2+). 4 helical membrane-spanning segments follow: residues 73–93 (LILG…PGAV), 110–130 (LAGP…MLIF), 133–153 (GSLL…LAGF), and 171–191 (PFIW…MMFW).

It belongs to the peptidase M50B family. Zn(2+) is required as a cofactor.

It is found in the cell membrane. The chain is Putative zinc metalloprotease MJ0611 from Methanocaldococcus jannaschii (strain ATCC 43067 / DSM 2661 / JAL-1 / JCM 10045 / NBRC 100440) (Methanococcus jannaschii).